Consider the following 902-residue polypeptide: Transcription factor FPSE_08121 (902 aa).

The tract at residues 1–47 (MVSPDNRPGTQGPSASAHAHDSRVPRKRPGSWDNNPSTAGNRAVKKR) is disordered. Positions 52 to 81 (CVSCRDRKVRCDVVNGGPPCTNCRLDDVDC) form a DNA-binding region, zn(2)-C6 fungal-type. Disordered regions lie at residues 92 to 189 (NPAR…EAEQ), 208 to 234 (HCEQQPQPQPSQGAATRSTPSAQPANP), 258 to 277 (ATEAPPSSSRMDNVSASANT), and 820 to 839 (TGVALTGQRSRQPSAGPNMT). Positions 120 to 137 (TDADTAAPGPAPGSASAT) are enriched in low complexity. Residues 168–177 (ETICDDDENE) are compositionally biased toward acidic residues. 4 stretches are compositionally biased toward polar residues: residues 178 to 187 (NNSWHNQQEA), 220 to 234 (GAATRSTPSAQPANP), 262 to 277 (PPSSSRMDNVSASANT), and 826 to 839 (GQRSRQPSAGPNMT).

It is found in the nucleus. Functionally, transcription factor; part of the Fusarium detoxification of benzoxazolinone cluster involved in the degradation of benzoxazolinones produced by the host plant. Maize, wheat, and rye produce the 2 benzoxazinone phytoanticipins 2,4-dihy-droxy-7-methoxy-1,4-benzoxazin-3-one (DIMBOA) and 2,4-dihydroxy-1,4-benzoxazin-3-one (DIBOA) that, due to their inherent instability once released, spontaneously degrade to the more stable corresponding benzoxazolinones, 6-methoxy-2-benzoxazolinone (MBOA) and 2-benzoxazolinone (BOA), respectively. FPSE_08121 positively regulates the expression of the FBD cluster gene FPSE_08120 in response to 2-aminophenol (2-AP) treatment and contributes quantitatively to benzoxazolinone tolerance. The protein is Transcription factor FPSE_08121 of Fusarium pseudograminearum (strain CS3096) (Wheat and barley crown-rot fungus).